A 457-amino-acid chain; its full sequence is Argininosuccinate lyase (457 aa).

Belongs to the lyase 1 family. Argininosuccinate lyase subfamily.

The protein localises to the cytoplasm. It carries out the reaction 2-(N(omega)-L-arginino)succinate = fumarate + L-arginine. It participates in amino-acid biosynthesis; L-arginine biosynthesis; L-arginine from L-ornithine and carbamoyl phosphate: step 3/3. The chain is Argininosuccinate lyase from Haemophilus influenzae (strain 86-028NP).